Reading from the N-terminus, the 371-residue chain is GTPase Obg (371 aa).

An Obg domain is found at 1-159 (MKFLDQAKVY…KTIWLRLKLI (159 aa)). The OBG-type G domain maps to 160–327 (ADAGLVGLPN…VLRALRDIIV (168 aa)). GTP is bound by residues 166 to 173 (GLPNAGKS), 191 to 195 (FTTLH), 212 to 215 (DIPG), 279 to 282 (SQID), and 308 to 310 (SAI). Mg(2+)-binding residues include S173 and T193. Residues 337 to 371 (APMKALKVRHRDMQSSGNEGESEDNSDRDDEEQQG) form a disordered region. The segment covering 356–371 (GESEDNSDRDDEEQQG) has biased composition (acidic residues).

This sequence belongs to the TRAFAC class OBG-HflX-like GTPase superfamily. OBG GTPase family. As to quaternary structure, monomer. Requires Mg(2+) as cofactor.

Its subcellular location is the cytoplasm. In terms of biological role, an essential GTPase which binds GTP, GDP and possibly (p)ppGpp with moderate affinity, with high nucleotide exchange rates and a fairly low GTP hydrolysis rate. Plays a role in control of the cell cycle, stress response, ribosome biogenesis and in those bacteria that undergo differentiation, in morphogenesis control. The sequence is that of GTPase Obg from Rhizobium rhizogenes (strain K84 / ATCC BAA-868) (Agrobacterium radiobacter).